Consider the following 291-residue polypeptide: Glucose and ribitol dehydrogenase (291 aa).

Positions 1–35 are disordered; it reads MASGGQFPPQKQESQPGKEHLMDPSPQHASPHYKP. 45–69 provides a ligand contact to NAD(+); sequence LVTGGDSGIGRSVCYHFALEGATVA. Ser-183 is a binding site for substrate. Residue Tyr-196 is the Proton acceptor of the active site.

It belongs to the short-chain dehydrogenases/reductases (SDR) family. Expressed in embryogenic cells, somatic embryos and seeds in the later stages of development, but not in non-embryogenic cells and mature leaves.

Its function is as follows. May act as a short alcohol-polyol-sugar dehydrogenase possibly related to carbohydrate metabolism and the acquisition of desiccation tolerance. May also be involved in signal transduction. The protein is Glucose and ribitol dehydrogenase (CAISE5) of Daucus carota (Wild carrot).